The primary structure comprises 285 residues: Probable E3 ubiquitin-protein ligase IE1 (285 aa).

At 1–201 (MASKDSDVRC…LPGYWDRDDR (201 aa)) the chain is on the cytoplasmic side. The segment at 124–183 (SIDEEGKQCWICRDGESLPEARYCNCYGDLQYCHEECLKTWISMSGEKKCKFCQTPYKVN) adopts an RING-CH-type zinc-finger fold. Positions 132, 135, 147, 149, 157, 160, 173, and 176 each coordinate Zn(2+). The chain crosses the membrane as a helical span at residues 202–222 (FVFIAGFIGMGTILAGWIASF). At 223–238 (FYLLVVLCGKYFTYKD) the chain is on the extracellular side. A helical membrane pass occupies residues 239–259 (VMIVVGGLAIIQVVGLMFSLF). The Cytoplasmic segment spans residues 260 to 285 (MYFQIGNLLRQYINYMTETNIDPLRT).

It localises to the membrane. The catalysed reaction is S-ubiquitinyl-[E2 ubiquitin-conjugating enzyme]-L-cysteine + [acceptor protein]-L-lysine = [E2 ubiquitin-conjugating enzyme]-L-cysteine + N(6)-ubiquitinyl-[acceptor protein]-L-lysine.. The protein operates within protein modification; protein ubiquitination. In terms of biological role, controls the expression of later classes of genes and also of the IE genes (Potential). E3 ubiquitin-protein ligase. E3 ubiquitin ligases accept ubiquitin from an E2 ubiquitin-conjugating enzyme in the form of a thioester and then directly transfer the ubiquitin to targeted substrates. This chain is Probable E3 ubiquitin-protein ligase IE1 (IE1), found in Bovine herpesvirus 4 (strain DN-599) (BoHV-4).